A 280-amino-acid polypeptide reads, in one-letter code: Clathrin adapter accessory protein LAA2 (280 aa).

The segment at Met-1 to Asn-26 is disordered. Positions Asp-19–Ala-30 match the Ear-binding motif motif.

Interacts with the clathrin-associated adapter complex AP-1. Interacts with LAA1.

The protein localises to the cytoplasmic vesicle. The protein resides in the clathrin-coated vesicle. Its function is as follows. Involved in localization of clathrin-associated adapter complex (AP-1) and subsequent AP-1-mediated clathrin-coated vesicle cargo loading. Directly mediates the interaction between LAA1 and AP-1 which is required for AP-1 localization. In complex with LAA1, cooperates with the small GTPase ARF1 and the phosphatidyl-inositol-4-phosphate (PI4P) synthesis to confer temporal specificity to AP-1 recruitment. In Saccharomyces cerevisiae (strain ATCC 204508 / S288c) (Baker's yeast), this protein is Clathrin adapter accessory protein LAA2.